The sequence spans 118 residues: Large ribosomal subunit protein bL20 (118 aa).

This sequence belongs to the bacterial ribosomal protein bL20 family.

Functionally, binds directly to 23S ribosomal RNA and is necessary for the in vitro assembly process of the 50S ribosomal subunit. It is not involved in the protein synthesizing functions of that subunit. The polypeptide is Large ribosomal subunit protein bL20 (Ectopseudomonas mendocina (strain ymp) (Pseudomonas mendocina)).